Consider the following 256-residue polypeptide: UPF0246 protein Bpet1601 (256 aa).

Belongs to the UPF0246 family.

This is UPF0246 protein Bpet1601 from Bordetella petrii (strain ATCC BAA-461 / DSM 12804 / CCUG 43448).